Reading from the N-terminus, the 217-residue chain is Glutathione S-transferase U20 (217 aa).

The GST N-terminal domain occupies 3-82 (NLPILLDYWP…YVDEAWPEKN (80 aa)). Glutathione-binding residues include Ser-13, Ile-54, and Ser-67. One can recognise a GST C-terminal domain in the interval 88-208 (DPYGRAQARF…LPDSEKIVAY (121 aa)).

This sequence belongs to the GST superfamily. Tau family. In terms of assembly, homodimerization. Interacts with JAR1/FIN219 under continuous far red (cFR) light to stimulate JAR1/FIN219 activity and substrate selectivity. Mostly associated with vascular tissues, especially near hydathodes.

The protein localises to the nucleus. Its subcellular location is the cytoplasm. It localises to the cytosol. The catalysed reaction is RX + glutathione = an S-substituted glutathione + a halide anion + H(+). With respect to regulation, activated by JAR1/FIN219. Exhibits glutathione-dependent thiol transferase activities. Can use glutathione (GSH) and 1-chloro-2,4-dinitrobenzene (CDNB) as substrates. Involved in the regulation of far-red light influence on development. Regulator of the interplay between light and JA signaling by increasing JAR1/FIN219 efficiency. Maybe involved in gravitropic signal transduction. This Arabidopsis thaliana (Mouse-ear cress) protein is Glutathione S-transferase U20.